Here is a 464-residue protein sequence, read N- to C-terminus: E3 ubiquitin-protein ligase MYLIP-B (464 aa).

Residues 1 to 279 (MLCHITRPDS…EIHAFYRCDT (279 aa)) form the FERM domain. An RING-type zinc finger spans residues 381-416 (CALCCEQEISAAFCPCGHMFCCYNCASQLQCCPVCR).

In terms of assembly, interacts with anxa5.

It is found in the cytoplasm. It localises to the cytosol. It catalyses the reaction S-ubiquitinyl-[E2 ubiquitin-conjugating enzyme]-L-cysteine + [acceptor protein]-L-lysine = [E2 ubiquitin-conjugating enzyme]-L-cysteine + N(6)-ubiquitinyl-[acceptor protein]-L-lysine.. Its pathway is protein modification; protein ubiquitination. Functionally, E3 ubiquitin-protein ligase that mediates ubiquitination and subsequent proteasomal degradation of myosin regulatory light chain (MRLC). Regulates cell movements during gastrulation by acting downstream of fz7 to antagonize the frizzled-signaling pathway. This Danio rerio (Zebrafish) protein is E3 ubiquitin-protein ligase MYLIP-B.